The following is a 982-amino-acid chain: Serine/threonine-protein kinase PknD (982 aa).

In terms of domain architecture, Protein kinase spans 51 to 342; sequence YQIIKSIGKG…ELIRDIENYL (292 aa). Residues 57–65 and lysine 80 contribute to the ATP site; that span reads IGKGGMGEV. The active-site Proton acceptor is aspartate 186.

This sequence belongs to the protein kinase superfamily. Ser/Thr protein kinase family. In terms of processing, autophosphorylated on serine and threonine residues.

It catalyses the reaction L-seryl-[protein] + ATP = O-phospho-L-seryl-[protein] + ADP + H(+). It carries out the reaction L-threonyl-[protein] + ATP = O-phospho-L-threonyl-[protein] + ADP + H(+). Together with the serine/threonine kinase Pkn1, may play a role in the specific interactions with host proteins during intracellular growth. This Protochlamydia amoebophila (strain UWE25) protein is Serine/threonine-protein kinase PknD.